The following is a 218-amino-acid chain: Dual specificity protein phosphatase TpbA (218 aa).

Residues 1–28 (MHRSPLAWLRLLLAAVLGAFLLGGPLHA) form the signal peptide. One can recognise a Tyrosine-protein phosphatase domain in the interval 44–188 (DPSINLYRMS…YVRGADVDGL (145 aa)). Asp-105 serves as the catalytic Proton donor/acceptor. Cys-132 functions as the Phosphocysteine intermediate in the catalytic mechanism.

This sequence belongs to the protein-tyrosine phosphatase family. In terms of assembly, monomer in solution.

Its subcellular location is the periplasm. It carries out the reaction O-phospho-L-tyrosyl-[protein] + H2O = L-tyrosyl-[protein] + phosphate. It catalyses the reaction O-phospho-L-threonyl-[protein] + H2O = L-threonyl-[protein] + phosphate. The catalysed reaction is O-phospho-L-seryl-[protein] + H2O = L-seryl-[protein] + phosphate. With respect to regulation, the phosphatase activity is completely inhibited by trisodium orthovanadate, a tyrosine phosphatase specific inhibitor. Its function is as follows. Phosphatase that regulates diverse phenotypes in P.aeruginosa via regulation of the concentration of cellular c-di-GMP. Acts by dephosphorylating the membrane-anchored diguanylate cyclase TpbB at tyrosine and serine/threonine sites, leading to inactivation of TpbB and reduced c-di-GMP production. The reduced cellular c-di-GMP concentration leads to reduced adhesin expression, reduced extracellular polysaccharide (EPS) production, pellicule production, cell aggregation and biofilm formation, and enhanced swimming and swarming. It affects colony morphology and controls rugose colony formation. TpbA also acts as a positive regulator of extracellular DNA (eDNA, a major component of the biofilm matrix) and cell lysis by reducing c-di-GMP concentrations. In vitro shows phosphatase activity toward p-nitrophenyl phosphate (pNPP), tyrosine phosphopeptides and a threonine phosphopeptide. Does not have phosphodiesterases (PDE) activity, and cannot degrade c-di-GMP. In Pseudomonas aeruginosa (strain UCBPP-PA14), this protein is Dual specificity protein phosphatase TpbA.